Consider the following 326-residue polypeptide: DNA-directed RNA polymerase subunit alpha (326 aa).

The interval 1–232 (MQSATEFLKP…SQLSVFADLE (232 aa)) is alpha N-terminal domain (alpha-NTD). The interval 246–326 (VDPLLLRPVD…NWPPAGLERP (81 aa)) is alpha C-terminal domain (alpha-CTD).

It belongs to the RNA polymerase alpha chain family. Homodimer. The RNAP catalytic core consists of 2 alpha, 1 beta, 1 beta' and 1 omega subunit. When a sigma factor is associated with the core the holoenzyme is formed, which can initiate transcription.

It catalyses the reaction RNA(n) + a ribonucleoside 5'-triphosphate = RNA(n+1) + diphosphate. Its function is as follows. DNA-dependent RNA polymerase catalyzes the transcription of DNA into RNA using the four ribonucleoside triphosphates as substrates. The chain is DNA-directed RNA polymerase subunit alpha from Thiobacillus denitrificans (strain ATCC 25259 / T1).